A 260-amino-acid chain; its full sequence is MKVLVLGLCRTGTSSLYVAQKELGMKPYHFRDIAFNTEHMKLWLTAMRAKFDGVGKPFQGKDFDQMLGEYDSVADTPACFFVEELLAAYPEAKVILTTRSPQSWLHSMQNTLITVISWRSWTVLSLFDREHSAFYWPLFNRIMRVMAKGNDPWKASATPSYLEYFDEHYTKVRRLVPKDRLLEWHPSQGWEPVCEFLDFPVPEKEFPHICTSDGNVRTHRSTYWKRWRNVVQKGAQTVGLVGLTVGGIWYFRSRLVGSSR.

A signal peptide spans 1–15; that stretch reads MKVLVLGLCRTGTSS.

It belongs to the cytochrome P450 family.

Its pathway is secondary metabolite biosynthesis. Part of the cluster that mediates the biosynthesis of a highly modified cyclo-arginine-tryptophan dipeptide (cRW). The first step of the pathway is perfornmed by the arginine-containing cyclodipeptide synthase (RCPDS) avaA that acts as the scaffold-generating enzyme and is responsible for formation of the cyclo-Arg-Trp (cRW) diketopiperazine. AvaB then acts as a multifunctional flavoenzyme that is responsible for generating the cyclo-Arg-formylkynurenine DKP, which can be deformylated by avaC. AvaB then further catalyzes an additional N-oxidation followed by cyclization and dehydration. The next step is an N-acetylation of the guanidine group catalyzed by the arginine N-acetyltransferase avaD. The roles of the additional enzymes identified within the ava cluster still have to be determined. This Aspergillus versicolor protein is Ava biosynthesis cluster protein M.